A 275-amino-acid polypeptide reads, in one-letter code: NH(3)-dependent NAD(+) synthetase (275 aa).

50 to 57 (GISGGVDS) is a binding site for ATP. Mg(2+) is bound at residue Asp-56. Arg-147 serves as a coordination point for deamido-NAD(+). Residue Thr-167 coordinates ATP. A Mg(2+)-binding site is contributed by Glu-172. Residues Lys-180 and Asp-187 each contribute to the deamido-NAD(+) site. Lys-196 and Thr-218 together coordinate ATP. Residue 267 to 268 (HK) participates in deamido-NAD(+) binding.

It belongs to the NAD synthetase family. As to quaternary structure, homodimer.

The enzyme catalyses deamido-NAD(+) + NH4(+) + ATP = AMP + diphosphate + NAD(+) + H(+). It functions in the pathway cofactor biosynthesis; NAD(+) biosynthesis; NAD(+) from deamido-NAD(+) (ammonia route): step 1/1. Its function is as follows. Catalyzes the ATP-dependent amidation of deamido-NAD to form NAD. Uses ammonia as a nitrogen source. The protein is NH(3)-dependent NAD(+) synthetase of Pseudomonas savastanoi pv. phaseolicola (strain 1448A / Race 6) (Pseudomonas syringae pv. phaseolicola (strain 1448A / Race 6)).